The following is a 67-amino-acid chain: Alpha-conotoxin-like Qc1.1b (67 aa).

The N-terminal stretch at 1–21 is a signal peptide; sequence MGMRMMFTMFLLVVLAITVVS. Positions 22–46 are excised as a propeptide; sequence FTSDHASDGRNTAANDKASKLMALR. Disulfide bonds link Cys49–Cys55 and Cys50–Cys63. The interval 51-53 is lacks the Ser-Xaa-Pro motif that is crucial for potent interaction with nAChR; that stretch reads DNP.

Belongs to the conotoxin A superfamily. Expressed by the venom duct.

Its subcellular location is the secreted. Functionally, alpha-conotoxins act on postsynaptic membranes, they bind to the nicotinic acetylcholine receptors (nAChR) and thus inhibit them. Has possibly a distinct nAChR binding mode from other alpha-conotoxins, due to a different three residue motif (lacks the Ser-Xaa-Pro motif). This is Alpha-conotoxin-like Qc1.1b from Conus quercinus (Oak cone).